The primary structure comprises 178 residues: NADH-quinone oxidoreductase subunit B 1 (178 aa).

[4Fe-4S] cluster contacts are provided by Cys-39, Cys-40, Cys-104, and Cys-135.

It belongs to the complex I 20 kDa subunit family. In terms of assembly, NDH-1 is composed of 14 different subunits. Subunits NuoB, C, D, E, F, and G constitute the peripheral sector of the complex. It depends on [4Fe-4S] cluster as a cofactor.

The protein localises to the cell inner membrane. The catalysed reaction is a quinone + NADH + 5 H(+)(in) = a quinol + NAD(+) + 4 H(+)(out). NDH-1 shuttles electrons from NADH, via FMN and iron-sulfur (Fe-S) centers, to quinones in the respiratory chain. The immediate electron acceptor for the enzyme in this species is believed to be a menaquinone. Couples the redox reaction to proton translocation (for every two electrons transferred, four hydrogen ions are translocated across the cytoplasmic membrane), and thus conserves the redox energy in a proton gradient. This Cytophaga hutchinsonii (strain ATCC 33406 / DSM 1761 / CIP 103989 / NBRC 15051 / NCIMB 9469 / D465) protein is NADH-quinone oxidoreductase subunit B 1.